The primary structure comprises 500 residues: Cytochrome P450 monooxygenase ausI (500 aa).

Residues 8-28 (LALLGQPLVPGLMVVSAILYL) form a helical membrane-spanning segment. Residue Cys-440 participates in heme binding.

It belongs to the cytochrome P450 family. Heme serves as cofactor.

Its subcellular location is the membrane. Its pathway is secondary metabolite biosynthesis; terpenoid biosynthesis. Its function is as follows. Cytochrome P450 monooxygenase; part of the gene cluster B that mediates the biosynthesis of the fungal meroterpenoid acetoxydehydroaustin. The first step of the pathway is the synthesis of 3,5-dimethylorsellinic acid by the polyketide synthase ausA. 3,5-dimethylorsellinic acid is then prenylated by the polyprenyl transferase ausN. Further epoxidation by the FAD-dependent monooxygenase ausM and cyclization by the probable terpene cyclase ausL lead to the formation of protoaustinoid A. Protoaustinoid A is then oxidized to spiro-lactone preaustinoid A3 by the combined action of the FAD-binding monooxygenases ausB and ausC, and the dioxygenase ausE. Acid-catalyzed keto-rearrangement and ring contraction of the tetraketide portion of preaustinoid A3 by ausJ lead to the formation of preaustinoid A4. The aldo-keto reductase ausK, with the help of ausH, is involved in the next step by transforming preaustinoid A4 into isoaustinone which is in turn hydroxylated by the P450 monooxygenase ausI to form austinolide. The cytochrome P450 monooxygenase ausG then modifies austinolide to austinol. Austinol is further acetylated to austin by the O-acetyltransferase ausP, which spontaneously changes to dehydroaustin. The cytochrome P450 monooxygenase then converts dehydroaustin is into 7-dehydrodehydroaustin. The hydroxylation catalyzed by ausR permits the second O-acetyltransferase ausQ to add an additional acetyl group to the molecule, leading to the formation of acetoxydehydroaustin. Due to genetic rearrangements of the clusters and the subsequent loss of some enzymes, the end product of the Penicillium brasilianum austinoid biosynthesis clusters is acetoxydehydroaustin. This is Cytochrome P450 monooxygenase ausI from Penicillium brasilianum.